The primary structure comprises 279 residues: Secreted RxLR effector protein 90 (279 aa).

The N-terminal stretch at Met-1–Thr-19 is a signal peptide. Residues Arg-29–Arg-46 carry the RxLR-dEER motif. 2 disordered regions span residues Arg-29 to His-53 and Ala-135 to Gly-176. Residue Asn-37 is glycosylated (N-linked (GlcNAc...) asparagine). A compositionally biased stretch (low complexity) spans Ala-135 to Ser-146. A compositionally biased stretch (polar residues) spans Leu-147–Ala-163. The span at Gln-166 to Gly-176 shows a compositional bias: gly residues. The N-linked (GlcNAc...) asparagine glycan is linked to Asn-217.

The protein belongs to the RxLR effector family.

It localises to the secreted. The protein localises to the host cell membrane. Its function is as follows. Secreted effector that completely suppresses the host cell death induced by cell death-inducing proteins. The polypeptide is Secreted RxLR effector protein 90 (Plasmopara viticola (Downy mildew of grapevine)).